A 2067-amino-acid chain; its full sequence is Nuclear receptor coactivator 6 (2067 aa).

The interval 1-932 (MVLDDLPNFE…PPRKKKNCHQ (932 aa)) is TBP/GTF2A-binding region. A CREBBP-binding region region spans residues 1-1060 (MVLDDLPNFE…LPVSQNVHPP (1060 aa)). The interval 1–1314 (MVLDDLPNFE…QAHKLDSVVV (1314 aa)) is NCOA1-binding region. The residue at position 95 (Arg95) is an Asymmetric dimethylarginine. 2 disordered regions span residues 181-253 (AVMT…RQMN) and 293-548 (TRPL…PGNS). The segment covering 293–304 (TRPLQQHQQQPQ) has biased composition (low complexity). 6 stretches are compositionally biased toward polar residues: residues 338-347 (SLGTMTTNQG), 357-372 (MQAQ…TVQT), 383-405 (GSQQ…QFTA), 421-457 (PLQQ…QQQM), 465-506 (NPLS…QGPQ), and 526-548 (GQAN…PGNS). The tract at residues 777-931 (VNNSPSQVMG…KPPRKKKNCH (155 aa)) is NCOA6IP-binding region. Ser888 carries the phosphoserine modification. Residues 891-895 (LVNLL) carry the LXXLL motif 1 motif. Disordered stretches follow at residues 903-1279 (HFGV…QGLN), 1313-1358 (VVNS…APKL), 1424-1481 (NIPQ…EENK), 1497-1581 (QLLD…IPPV), and 1769-1822 (LNPD…GKGK). Low complexity predominate over residues 907 to 916 (NNKQNNTNAN). Positions 917–929 (KPKKKKPPRKKKN) are enriched in basic residues. Residues 984 to 996 (QRPLPQMPPQLMQ) show a composition bias toward low complexity. Pro residues predominate over residues 999–1024 (APPPQPPQQQPQPQLPQQQQPPPPSQ). Residues 1025–1044 (PQSQQQQQQQQMMMMLMMQQ) show a composition bias toward low complexity. Asymmetric dimethylarginine occurs at positions 1050 and 1061. Over residues 1066–1078 (PDSQRMPVQQSGN) the composition is skewed to polar residues. Asymmetric dimethylarginine is present on Arg1099. Residues 1103 to 1123 (SVNTPMGSNSRKMVYQENPQN) show a composition bias toward polar residues. The segment covering 1124 to 1137 (SSSSPLGEMSSLPE) has biased composition (low complexity). Composition is skewed to polar residues over residues 1152-1165 (NMPS…NQLM), 1176-1194 (LSAT…SLPS), and 1205-1217 (APTQ…TPNR). Residues 1222-1235 (PYYPQTPNNRPPST) are compositionally biased toward pro residues. The span at 1313 to 1324 (VVNSGKQSNPGT) shows a compositional bias: polar residues. Over residues 1326 to 1349 (KRASPSNSRRSSPGSSRKTTPSPG) the composition is skewed to low complexity. Residues 1424 to 1435 (NIPQDSDCQNAQ) are compositionally biased toward polar residues. An LXXLL motif 2 motif is present at residues 1495–1499 (LSQLL). The segment covering 1545-1562 (EPSTSLSSPHSSEPCSTL) has biased composition (low complexity). The segment at 1644-2067 (SEGQSAAQSN…AVQSKRRKSK (424 aa)) is EP300/CRSP3-binding region. Positions 1775–1805 (SPQTNTSADQSTLPPSQPTTVVSSLLTNSPG) are enriched in polar residues. Residues 1806-1818 (SSANRRSPVSSSK) show a composition bias toward low complexity. Residues Lys1822 and Lys1825 each carry the N6-acetyllysine modification. Disordered stretches follow at residues 1840-1911 (GSLE…LPGG) and 1957-2067 (VGSH…RKSK). Residues 1871–1883 (EQCSTELDSKTPT) show a composition bias toward polar residues. Residues 1892–1904 (MTSSPMAPSSTST) are compositionally biased toward low complexity. Residues 2005-2014 (EPKEIVEKSK) show a composition bias toward basic and acidic residues. Phosphoserine is present on Ser2022.

In terms of assembly, monomer and homodimer. Interacts in vitro with the basal transcription factors GTF2A and TBP, suggesting an autonomous transactivation function. Interacts with NCOA1, CRSP3, RBM14, the histone acetyltransferase proteins EP300 and CREBBP, and with methyltransferase proteins NCOA6IP and PRMT2. Interacts with RBM39. Component of the MLL2/3 complex (also named ASCOM complex), at least composed of KMT2D/MLL2 or KMT2C/MLL3, ASH2L, RBBP5, WDR5, NCOA6, DPY30, KDM6A, PAXIP1/PTIP, PAGR1 and alpha- and beta-tubulin. Interacts with ZNF335; may enhance ligand-dependent transcriptional activation by nuclear hormone receptors. In terms of processing, phosphorylated. Widely expressed. High expression in testis and weak expression in small intestine.

It localises to the nucleus. In terms of biological role, nuclear receptor coactivator that directly binds nuclear receptors and stimulates the transcriptional activities in a hormone-dependent fashion. Coactivates expression in an agonist- and AF2-dependent manner. Involved in the coactivation of different nuclear receptors, such as for steroids (GR and ERs), retinoids (RARs and RXRs), thyroid hormone (TRs), vitamin D3 (VDR) and prostanoids (PPARs). Probably functions as a general coactivator, rather than just a nuclear receptor coactivator. May also be involved in the coactivation of the NF-kappa-B pathway. May coactivate expression via a remodeling of chromatin and its interaction with histone acetyltransferase proteins. Involved in placental, cardiac, hepatic and embryonic development. This chain is Nuclear receptor coactivator 6 (Ncoa6), found in Mus musculus (Mouse).